The primary structure comprises 375 residues: Terpene cyclase braA (375 aa).

Mg(2+) is bound by residues D116, N264, and S268. The short motif at 116–120 (DDEID) is the D(D/E)XX(D/E) motif element. The NSE motif signature appears at 264 to 272 (NDVLSLQKE). The short motif at 348 to 355 (WSYSCERY) is the WxxxxxRY motif element. The (2E,6E)-farnesyl diphosphate site is built by R354 and Y355.

The protein belongs to the terpene synthase family. In terms of assembly, homodimer. The cofactor is Mg(2+).

The catalysed reaction is (2E,6E)-farnesyl diphosphate + H2O = trichobrasilenol + diphosphate. It functions in the pathway secondary metabolite biosynthesis. Its function is as follows. Terpene cyclase; part of the gene cluster that mediates the biosynthesis of the brasilane terpene glycosides brasilane D and E. The biosynthesis starts with the activity of the terpene cyclase braA that converts farnesyl pyrophosphate into the sesquiterpene alcohol trichobrasilenol. Subsequently, trichobrasilenol is glycosylated by the O-glycosyltransferase braB putatively using UDP-GlcNAc as sugar donor to yield brasilane A. The latter then undergoes two rounds of oxidation performed by the cytochrome P450 monooxygenase braC. In the first round braC hydroxylates C-12 forming brasilane D, which serves as substrate in the second round to establish the epoxide at the bond between C-5 and C-10 and oxidize the alcohol at C-12 to an aldehyde leading to the final product brasilane E. The polypeptide is Terpene cyclase braA (Annulohypoxylon truncatum (Hypoxylon truncatum)).